Consider the following 120-residue polypeptide: Crustacean hyperglycemic hormones 4 (120 aa).

The N-terminal stretch at 1–26 is a signal peptide; the sequence is MVALNTLSAVSAALLVLAASPSPASA. Disulfide bonds link Cys53–Cys89, Cys69–Cys85, and Cys72–Cys98. Valine amide is present on Val118.

The protein belongs to the arthropod CHH/MIH/GIH/VIH hormone family.

The protein resides in the secreted. Hormone found in the sinus gland of isopods and decapods which controls the blood sugar level. Has a secretagogue action over the amylase released from the midgut gland. May act as a stress hormone and may be involved in the control of molting and reproduction. This is Crustacean hyperglycemic hormones 4 (CHH4) from Penaeus monodon (Giant tiger prawn).